The sequence spans 392 residues: Imidazolonepropionase (392 aa).

H70 and H72 together coordinate Fe(3+). Zn(2+) is bound by residues H70 and H72. R79, Y137, and H164 together coordinate 4-imidazolone-5-propanoate. Residue Y137 coordinates N-formimidoyl-L-glutamate. H227 serves as a coordination point for Fe(3+). Zn(2+) is bound at residue H227. Q230 contacts 4-imidazolone-5-propanoate. Residue D301 participates in Fe(3+) binding. D301 contributes to the Zn(2+) binding site. Residues N303 and G305 each coordinate N-formimidoyl-L-glutamate. T306 is a 4-imidazolone-5-propanoate binding site.

The protein belongs to the metallo-dependent hydrolases superfamily. HutI family. Requires Zn(2+) as cofactor. It depends on Fe(3+) as a cofactor.

It localises to the cytoplasm. The enzyme catalyses 4-imidazolone-5-propanoate + H2O = N-formimidoyl-L-glutamate. It participates in amino-acid degradation; L-histidine degradation into L-glutamate; N-formimidoyl-L-glutamate from L-histidine: step 3/3. Its function is as follows. Catalyzes the hydrolytic cleavage of the carbon-nitrogen bond in imidazolone-5-propanoate to yield N-formimidoyl-L-glutamate. It is the third step in the universal histidine degradation pathway. This Nocardia farcinica (strain IFM 10152) protein is Imidazolonepropionase.